We begin with the raw amino-acid sequence, 132 residues long: Small ribosomal subunit protein uS8 (132 aa).

The protein belongs to the universal ribosomal protein uS8 family. As to quaternary structure, part of the 30S ribosomal subunit. Contacts proteins S5 and S12.

In terms of biological role, one of the primary rRNA binding proteins, it binds directly to 16S rRNA central domain where it helps coordinate assembly of the platform of the 30S subunit. The protein is Small ribosomal subunit protein uS8 of Rhodopseudomonas palustris (strain HaA2).